The primary structure comprises 250 residues: uncharacterized protein (250 aa).

A signal peptide spans 1–24 (MKGFLKPNFSLGALFLTLSPIATA). Cys-25 is lipidated: N-palmitoyl cysteine. Residue Cys-25 is the site of S-diacylglycerol cysteine attachment. The 157-residue stretch at 44–200 (RLRKARVNHW…FNNRKNIFSY (157 aa)) folds into the TNase-like domain.

The protein localises to the cell membrane. This is an uncharacterized protein from Mycoplasma genitalium (strain ATCC 33530 / DSM 19775 / NCTC 10195 / G37) (Mycoplasmoides genitalium).